Reading from the N-terminus, the 184-residue chain is ATP-dependent protease subunit HslV (184 aa).

Threonine 12 is an active-site residue. Residues alanine 166, cysteine 169, and threonine 172 each coordinate Na(+).

It belongs to the peptidase T1B family. HslV subfamily. As to quaternary structure, a double ring-shaped homohexamer of HslV is capped on each side by a ring-shaped HslU homohexamer. The assembly of the HslU/HslV complex is dependent on binding of ATP.

Its subcellular location is the cytoplasm. The enzyme catalyses ATP-dependent cleavage of peptide bonds with broad specificity.. Allosterically activated by HslU binding. Protease subunit of a proteasome-like degradation complex believed to be a general protein degrading machinery. The polypeptide is ATP-dependent protease subunit HslV (Brucella abortus (strain S19)).